Consider the following 360-residue polypeptide: Epoxide hydrolase 3 (360 aa).

The helical transmembrane segment at 22 to 42 threads the bilayer; sequence AFMWSLVFSVALVAAAVYGCI. The active-site Nucleophile is the Asp173. The active-site Proton donor is the Tyr281. His337 acts as the Proton acceptor in catalysis.

This sequence belongs to the AB hydrolase superfamily. Epoxide hydrolase family.

The protein resides in the microsome membrane. It carries out the reaction an epoxide + H2O = an ethanediol. The enzyme catalyses 9,10-epoxyoctadecanoate + H2O = 9,10-dihydroxyoctadecanoate. The catalysed reaction is 9,10-epoxy-(12Z)-octadecenoate + H2O = 9,10-dihydroxy-(12Z)-octadecenoate. It catalyses the reaction 8,9-epoxy-(5Z,11Z,14Z)-eicosatrienoate + H2O = 8,9-dihydroxy-(5Z,11Z,14Z)-eicosatrienoate. It carries out the reaction 11,12-epoxy-(5Z,8Z,14Z)-eicosatrienoate + H2O = 11,12-dihydroxy-(5Z,8Z,14Z)-eicosatrienoate. The enzyme catalyses 14,15-epoxy-(5Z,8Z,11Z)-eicosatrienoate + H2O = 14,15-dihydroxy-(5Z,8Z,11Z)-eicosatrienoate. Inhibited by 1-(1-acetylpiperidin-4-yl)-3-(4-(trifl uoromethoxy)phenyl)urea (TPAU), 1-cyclohexyl-3-dodecylurea (CDU), 12-(3-adamantan-1-yl-ureido)-dodecanoic acid (AUDA), 1-((3S, 5S, 7S)-adamantan-1-yl)-3-(5-(2-(2-ethoxyethoxy) ethoxy)pentyl)urea (AEPU) and to a lesser extent by 8-(3-((3S, 5S, 7S)-adamantan-1-yl)ureido) octanoic acid (AUOA). Its function is as follows. Catalyzes the hydrolysis of epoxide-containing fatty acids. Active in vitro against epoxyeicosatrienoic acids (EETs) including 8,9-EET, 9,10-EET, 11,12-EET and 14,15-EET and leukotoxin. The protein is Epoxide hydrolase 3 (EPHX3) of Homo sapiens (Human).